A 427-amino-acid polypeptide reads, in one-letter code: UPF0597 protein CPR_0790 (427 aa).

It belongs to the UPF0597 family.

The polypeptide is UPF0597 protein CPR_0790 (Clostridium perfringens (strain SM101 / Type A)).